A 413-amino-acid chain; its full sequence is Hemolin (413 aa).

Positions 1 to 19 (MAFKSIAVLSACIIVGSAL) are cleaved as a signal peptide. Ig-like C2-type domains are found at residues 25 to 112 (PVLK…RVIS), 122 to 211 (PAKT…EEVV), 233 to 322 (PQYV…LKLT), and 327 to 413 (PKYE…VQVN). Intrachain disulfides connect cysteine 46/cysteine 97, cysteine 140/cysteine 199, cysteine 252/cysteine 305, and cysteine 349/cysteine 395. N-linked (GlcNAc...) asparagine glycosylation occurs at asparagine 283.

Belongs to the hemolin family. As to expression, hemolymph.

Its subcellular location is the secreted. It localises to the extracellular space. Insect-immune protein. Forms a protein complex at the bacterial surface. Can inhibit hemocyte aggregation. The protein is Hemolin of Hyalophora cecropia (Cecropia moth).